The sequence spans 61 residues: Alpha-conotoxin-like Tx1.2 (61 aa).

Positions 1–20 (MFTVFLLVVLATTVVSFTSG) are cleaved as a signal peptide. Residues 21 to 42 (RSTFRGRNAAAKASGLVSLTDR) constitute a propeptide that is removed on maturation. 4-hydroxyproline is present on residues Pro44 and Pro50. Cystine bridges form between Cys46–Cys52 and Cys47–Cys60. Residues 48–50 (SHP) form a ser-Xaa-Pro motif, crucial for potent interaction with nAChR region.

Belongs to the conotoxin A superfamily. Expressed by the venom duct.

The protein resides in the secreted. In terms of biological role, alpha-conotoxins act on postsynaptic membranes, they bind to the nicotinic acetylcholine receptors (nAChR) and thus inhibit them. This toxin also inhibits high voltage-activated (HVA) calcium channel currents in rat DRG neurons (8% inhibition at 1 uM toxin) probably by activating GABA(B) receptors (GABBR1 and/or GABBR2). In Conus textile (Cloth-of-gold cone), this protein is Alpha-conotoxin-like Tx1.2.